A 276-amino-acid polypeptide reads, in one-letter code: Rhomboid protease GlpG (276 aa).

A run of 6 helical transmembrane segments spans residues 94-114 (GPFT…QNLL), 142-162 (AFMH…WYLG), 169-189 (IGSG…GFVQ), 192-212 (FSGP…GYVW), 229-249 (LILF…GMAI), and 252-272 (GAHV…TLHG). The Nucleophile role is filled by Ser201. His254 is a catalytic residue.

The protein belongs to the peptidase S54 family.

It localises to the cell inner membrane. The enzyme catalyses Cleaves type-1 transmembrane domains using a catalytic dyad composed of serine and histidine that are contributed by different transmembrane domains.. Rhomboid-type serine protease that catalyzes intramembrane proteolysis. This chain is Rhomboid protease GlpG, found in Klebsiella pneumoniae (strain 342).